A 299-amino-acid polypeptide reads, in one-letter code: MQENTRLRIAIQKSGRLSKESMKLLSECGVKMHIHEQSLIAFSTNLPIDILRVRDDDIPGLIFDGVVDLGIIGENVLEENELKRQSLGENPNYKLLKKLDFGFCRLSLALPQENKFQNLKDFEGLRIATSYPQLLKRFMKENGINYKNCMLTGSIEVAPRANLADAICDLVSSGATLQANNLKEIKVIYESRACLIQKENALIKEKQALVDKIMLRVAGVMQARESKYIMLHAPKEKLDKIQALLPGVERPTILPLAHDEKNVALHMVSKENLFWETMEALKEEGASSILVLPIEKMLK.

The protein belongs to the ATP phosphoribosyltransferase family. Long subfamily. It depends on Mg(2+) as a cofactor.

It is found in the cytoplasm. The catalysed reaction is 1-(5-phospho-beta-D-ribosyl)-ATP + diphosphate = 5-phospho-alpha-D-ribose 1-diphosphate + ATP. The protein operates within amino-acid biosynthesis; L-histidine biosynthesis; L-histidine from 5-phospho-alpha-D-ribose 1-diphosphate: step 1/9. Feedback inhibited by histidine. Its function is as follows. Catalyzes the condensation of ATP and 5-phosphoribose 1-diphosphate to form N'-(5'-phosphoribosyl)-ATP (PR-ATP). Has a crucial role in the pathway because the rate of histidine biosynthesis seems to be controlled primarily by regulation of HisG enzymatic activity. This is ATP phosphoribosyltransferase from Campylobacter jejuni subsp. doylei (strain ATCC BAA-1458 / RM4099 / 269.97).